The chain runs to 119 residues: U-scoloptoxin(01)-Er1a (119 aa).

Positions 1-22 are cleaved as a signal peptide; that stretch reads MEIHSNIILLLLIALFAIFVKM. The Chitin-binding type-2 domain occupies 39-97; the sequence is NFACSGKKPGFYADEGFDCQVYHMCSPEGQLTTYLCGPGTIFNQKKLVCDLPTNYNCAD. Residues C74 and C87 are joined by a disulfide bond.

Belongs to the scoloptoxin-01 family. In terms of processing, contains 3 disulfide bonds. As to expression, expressed by the venom gland.

The protein resides in the secreted. The sequence is that of U-scoloptoxin(01)-Er1a from Ethmostigmus rubripes (Giant centipede).